Consider the following 95-residue polypeptide: FXYD domain-containing ion transport regulator 6 (95 aa).

Positions 1–18 (MELVLVFLCSLLAPMVLA) are cleaved as a signal peptide. Residues 19–35 (SAAEKEKEMDPFHYDYQ) are Extracellular-facing. Residues 36-57 (TLRIGGLVFAVVLFSVGILLIL) traverse the membrane as a helical segment. Residues 58 to 95 (SRRCKCSFNQKPRAPGDEEAQVENLITANATEPQKAEN) lie on the Cytoplasmic side of the membrane. A disordered region spans residues 69 to 95 (PRAPGDEEAQVENLITANATEPQKAEN).

The protein belongs to the FXYD family. In terms of assembly, regulatory subunit of the sodium/potassium-transporting ATPase which is composed of a catalytic alpha subunit, a non-catalytic beta subunit and an additional regulatory subunit. The regulatory subunit, a member of the FXYD protein family, modulates the enzymatic activity in a tissue- and isoform-specific way by changing affinities of the Na+/K+-ATPase toward Na(+), K(+) or ATP.

Its subcellular location is the cell membrane. Functionally, associates with and regulates the activity of the sodium/potassium-transporting ATPase (NKA) which catalyzes the hydrolysis of ATP coupled with the exchange of Na(+) and K(+) ions across the plasma membrane. Reduces the apparent affinity for intracellular Na(+) with no change in the apparent affinity for extracellular K(+). In addition to modulating NKA kinetics, may also function as a regulator of NKA localization to the plasma membrane. This chain is FXYD domain-containing ion transport regulator 6, found in Homo sapiens (Human).